A 149-amino-acid chain; its full sequence is Deoxyuridine 5'-triphosphate nucleotidohydrolase (149 aa).

Substrate contacts are provided by residues R68–G70, N81, and L85–D87.

Belongs to the dUTPase family. The cofactor is Mg(2+).

It catalyses the reaction dUTP + H2O = dUMP + diphosphate + H(+). It participates in pyrimidine metabolism; dUMP biosynthesis; dUMP from dCTP (dUTP route): step 2/2. Its function is as follows. This enzyme is involved in nucleotide metabolism: it produces dUMP, the immediate precursor of thymidine nucleotides and it decreases the intracellular concentration of dUTP so that uracil cannot be incorporated into DNA. This chain is Deoxyuridine 5'-triphosphate nucleotidohydrolase, found in Nitrosomonas eutropha (strain DSM 101675 / C91 / Nm57).